The primary structure comprises 2371 residues: Reducing polyketide synthase DEP5 (2371 aa).

The region spanning 47 to 477 (LEPIAVVGMG…GTNAHTIIES (431 aa)) is the Ketosynthase family 3 (KS3) domain. Catalysis depends on for beta-ketoacyl synthase activity residues Cys221, His358, and His399. Residues 593-905 (VFTGQGAQWA…QYLPTLIRGS (313 aa)) are malonyl-CoA:ACP transacylase (MAT) domain. The For malonyltransferase activity role is filled by Ser685. The N-terminal hotdog fold stretch occupies residues 982-1120 (HDVLGQLTIG…GSIRINTSNK (139 aa)). The tract at residues 982–1158 (HDVLGQLTIG…FNYGPTFQDM (177 aa)) is dehydratase (DH) domain. The PKS/mFAS DH domain occupies 982-1286 (HDVLGQLTIG…CTAYEAAIPQ (305 aa)). His1014 serves as the catalytic Proton acceptor; for dehydratase activity. Residues 1132–1286 (PQRASGKLWN…CTAYEAAIPQ (155 aa)) form a C-terminal hotdog fold region. The active-site Proton donor; for dehydratase activity is Asp1195. Positions 1656 to 1964 (GKVEAGKVVF…QSLSSTETVL (309 aa)) are enoyl reductase (ER) domain. Positions 1988-2163 (ATYLLVGCLG…KHACAVVLPM (176 aa)) are ketoreductase (KR) domain. Positions 2286 to 2364 (SLVRDHFISK…KFAELVCAAQ (79 aa)) constitute a Carrier domain. Ser2323 carries the post-translational modification O-(pantetheine 4'-phosphoryl)serine.

It functions in the pathway polyketide biosynthesis. In terms of biological role, part of the gene cluster that mediates the biosynthesis of depudecin, a highly oxidized eleven-carbon linear polyketide that acts as a histone deacetylase (HDAC) inhibitor and makes a small contribution to pathogenesis. The reducing polyketide synthase DEP5 is the central enzyme in depudecin biosynthesis by yielding the backbone polyketide chain. The monooxygenases DEP2 and DEP4, as well as the uncharacterized protein DEP1, then act as tailoring enzymes to modify the intermediate polyketide chain into depudecin. The protein is Reducing polyketide synthase DEP5 of Fusarium langsethiae.